The chain runs to 247 residues: Uroporphyrinogen-III C-methyltransferase (247 aa).

S-adenosyl-L-homocysteine-binding positions include Pro12, 117–118, Met168, Ala197, and Ala225; that span reads TA.

It belongs to the precorrin methyltransferase family.

The enzyme catalyses uroporphyrinogen III + 2 S-adenosyl-L-methionine = precorrin-2 + 2 S-adenosyl-L-homocysteine + H(+). It functions in the pathway cofactor biosynthesis; adenosylcobalamin biosynthesis; precorrin-2 from uroporphyrinogen III: step 1/1. It participates in porphyrin-containing compound metabolism; siroheme biosynthesis; precorrin-2 from uroporphyrinogen III: step 1/1. In terms of biological role, catalyzes the two successive C-2 and C-7 methylation reactions involved in the conversion of uroporphyrinogen III to precorrin-2 via the intermediate formation of precorrin-1. It is a step in the biosynthesis of both cobalamin (vitamin B12) and siroheme. In Pseudomonas fluorescens, this protein is Uroporphyrinogen-III C-methyltransferase.